Consider the following 650-residue polypeptide: MAFSGALTITDLDDFLTPSQACIIPVRNNKKPAEDEGPTEIHIDSNNNYYEVSTYPSVGHDDDIGNSKKALEKAEINLNDCLACSGCITSTESLLITMQSQNEILEFIKTNPTVVDPESPCHKPRLPILSISPQTLASLSAAYATASSRPPIPLLVLLRRIRAFLSQPEKGSWRVWDTTFARHMSLRESVVEFHERKDKKEKGKAAEMPMLASACPGWVCYAEKAQGDMLPLLSAARSSQGIIGALAKSWYGHKLQHKPDEIYHVTAMPCYDKKLEASRSDFYSSLYSTRDVDCVLTTGELDLLLQELGFDPHVPIANESTPSYSATEDSPFPELLTHEGSSSGSYLQTIIHDVQRSHPNPTRIITREIRGSTDNIEYLIQDTITGQIVFKGAKVYGFRNLQNLVRKVAKETGIGRSGRGAGAGKLSAAVAARRRKAKTAAPAATSATTSAEGTDVESIASLSLVSGEDKKLDFVEVMACPGGCVNGGGQMKPTVPTPSAPEAMEVDEEGYQRPLPDDGVAVAVNGGSNNVGTGTVAGMEEGMRWSTKEWVAKVEDIYWTGLPTPPASPPLTASNVNGFAPQVKTNGTTNGQVNNGVDRNLQSDQLAEEIIHEVCGDDASKRWDFMRTRFRKVESDVLSSGGVTHEAVKW.

8 residues coordinate [4Fe-4S] cluster: Cys22, Cys81, Cys84, Cys87, Cys215, Cys270, Cys480, and Cys484.

Belongs to the NARF family.

Its function is as follows. Component of the cytosolic Fe/S protein assembly machinery. Required for maturation of extramitochondrial Fe/S proteins. May play a role in the transfer of pre-assembled Fe/S clusters to target apoproteins. In Cryptococcus neoformans var. neoformans serotype D (strain JEC21 / ATCC MYA-565) (Filobasidiella neoformans), this protein is Cytosolic Fe-S cluster assembly factor NAR1 (NAR1).